Here is a 497-residue protein sequence, read N- to C-terminus: tRNA-2-methylthio-N(6)-dimethylallyladenosine synthase (497 aa).

An MTTase N-terminal domain is found at 44–161; that stretch reads KKVFVTTQGC…LPELYDQSHQ (118 aa). [4Fe-4S] cluster contacts are provided by C53, C90, C124, C205, C209, and C212. Positions 191-423 constitute a Radical SAM core domain; that stretch reads RVEGFKAFVS…QKVIIDSTLA (233 aa). A TRAM domain is found at 426 to 494; the sequence is HEMVGTTTRV…PHMVKGEIEA (69 aa).

The protein belongs to the methylthiotransferase family. MiaB subfamily. As to quaternary structure, monomer. Requires [4Fe-4S] cluster as cofactor.

It is found in the cytoplasm. The catalysed reaction is N(6)-dimethylallyladenosine(37) in tRNA + (sulfur carrier)-SH + AH2 + 2 S-adenosyl-L-methionine = 2-methylsulfanyl-N(6)-dimethylallyladenosine(37) in tRNA + (sulfur carrier)-H + 5'-deoxyadenosine + L-methionine + A + S-adenosyl-L-homocysteine + 2 H(+). Catalyzes the methylthiolation of N6-(dimethylallyl)adenosine (i(6)A), leading to the formation of 2-methylthio-N6-(dimethylallyl)adenosine (ms(2)i(6)A) at position 37 in tRNAs that read codons beginning with uridine. The sequence is that of tRNA-2-methylthio-N(6)-dimethylallyladenosine synthase from Psychrobacter cryohalolentis (strain ATCC BAA-1226 / DSM 17306 / VKM B-2378 / K5).